Reading from the N-terminus, the 66-residue chain is Alpha-actitoxin-Ms11a-2 (66 aa).

An N-terminal signal peptide occupies residues 1–24 (MASKIFFVLAVFLVMSAVLPESFA). 3 disulfides stabilise this stretch: cysteine 26–cysteine 41, cysteine 33–cysteine 46, and cysteine 40–cysteine 61.

It localises to the secreted. The protein localises to the nematocyst. Functionally, alpha-toxins act on postsynaptic membranes, they bind to the nicotinic acetylcholine receptors (nAChR) and thus inhibit them. This toxin competes with alpha-bungarotoxin for binding to orthosteric sites on muscle-type T.carlifornicus (IC(50)=1080 nM) and human alpha-7/CHRNA7 nAChRs (IC(50)=14.13 uM). The protein is Alpha-actitoxin-Ms11a-2 of Metridium senile (Brown sea anemone).